The following is a 214-amino-acid chain: Thiamine pyrophosphokinase (214 aa).

The protein belongs to the thiamine pyrophosphokinase family.

It carries out the reaction thiamine + ATP = thiamine diphosphate + AMP + H(+). It participates in cofactor biosynthesis; thiamine diphosphate biosynthesis; thiamine diphosphate from thiamine: step 1/1. Functionally, catalyzes the ATP-dependent phosphorylation of thiamine to thiamine pyrophosphate. Is involved in thiamine salvage. This Bacillus subtilis (strain 168) protein is Thiamine pyrophosphokinase.